The primary structure comprises 355 residues: DNA polymerase IV (355 aa).

Residues 7–188 enclose the UmuC domain; the sequence is IIHIDMDCFY…LPVRKLFGVG (182 aa). Positions 11 and 106 each coordinate Mg(2+). The active site involves Glu-107.

This sequence belongs to the DNA polymerase type-Y family. In terms of assembly, monomer. It depends on Mg(2+) as a cofactor.

Its subcellular location is the cytoplasm. It carries out the reaction DNA(n) + a 2'-deoxyribonucleoside 5'-triphosphate = DNA(n+1) + diphosphate. In terms of biological role, poorly processive, error-prone DNA polymerase involved in untargeted mutagenesis. Copies undamaged DNA at stalled replication forks, which arise in vivo from mismatched or misaligned primer ends. These misaligned primers can be extended by PolIV. Exhibits no 3'-5' exonuclease (proofreading) activity. May be involved in translesional synthesis, in conjunction with the beta clamp from PolIII. This is DNA polymerase IV from Legionella pneumophila subsp. pneumophila (strain Philadelphia 1 / ATCC 33152 / DSM 7513).